A 293-amino-acid polypeptide reads, in one-letter code: Chorion protein S36 (293 aa).

The N-terminal stretch at 1-20 (MQLGLWFGLFAVAAAPLVSA) is a signal peptide. Polar residues predominate over residues 235-253 (QSYGQPQAYNQPQAYSQPQ). The tract at residues 235-293 (QSYGQPQAYNQPQAYSQPQSYGNSGSSGAGNSGPSSDSYAAGAETPLYASPAPYGSPSY) is disordered.

Belongs to the chorion protein S36 family.

Its subcellular location is the secreted. Functionally, chorion membrane (egg shell) protein; protects the egg from the environment. This is Chorion protein S36 (Cp36) from Drosophila virilis (Fruit fly).